A 170-amino-acid chain; its full sequence is ATP synthase subunit b (170 aa).

A helical membrane pass occupies residues 15–37 (LNLFETNVLNWAVVVFGLYKFLP).

Belongs to the ATPase B chain family. In terms of assembly, F-type ATPases have 2 components, F(1) - the catalytic core - and F(0) - the membrane proton channel. F(1) has five subunits: alpha(3), beta(3), gamma(1), delta(1), epsilon(1). F(0) has four main subunits: a(1), b(1), b'(1) and c(10-14). The alpha and beta chains form an alternating ring which encloses part of the gamma chain. F(1) is attached to F(0) by a central stalk formed by the gamma and epsilon chains, while a peripheral stalk is formed by the delta, b and b' chains.

Its subcellular location is the cellular thylakoid membrane. In terms of biological role, f(1)F(0) ATP synthase produces ATP from ADP in the presence of a proton or sodium gradient. F-type ATPases consist of two structural domains, F(1) containing the extramembraneous catalytic core and F(0) containing the membrane proton channel, linked together by a central stalk and a peripheral stalk. During catalysis, ATP synthesis in the catalytic domain of F(1) is coupled via a rotary mechanism of the central stalk subunits to proton translocation. Functionally, component of the F(0) channel, it forms part of the peripheral stalk, linking F(1) to F(0). The protein is ATP synthase subunit b of Prochlorococcus marinus (strain MIT 9515).